Here is a 361-residue protein sequence, read N- to C-terminus: uncharacterized protein (361 aa).

Disordered regions lie at residues 53–75 (KNISNNNNNNNNNNNNVCGNINN) and 150–211 (NYNN…YHHY). Low complexity predominate over residues 150-198 (NYNNYNNNNNNNNNNNNNNNNNNNNNNNNNNNNNNKNNNKNNNNKPNNF). Basic residues predominate over residues 199-211 (IHHHHHHHHYHHY). Residues 225 to 245 (IFIGLMAFLILFILMVIGLLI) form a helical membrane-spanning segment.

It localises to the membrane. This is an uncharacterized protein from Dictyostelium discoideum (Social amoeba).